A 154-amino-acid chain; its full sequence is Deoxyuridine 5'-triphosphate nucleotidohydrolase (154 aa).

Residues 64-66, Asn-77, 81-83, and Lys-91 contribute to the substrate site; these read RSG and TVD. The interval 135-154 is disordered; sequence LADTTRGDGGHGSSGGHASL. Residues 144–154 are compositionally biased toward gly residues; the sequence is GHGSSGGHASL.

It belongs to the dUTPase family. As to quaternary structure, homotrimer. Mg(2+) serves as cofactor.

It carries out the reaction dUTP + H2O = dUMP + diphosphate + H(+). It participates in pyrimidine metabolism; dUMP biosynthesis; dUMP from dCTP (dUTP route): step 2/2. Its function is as follows. This enzyme is involved in nucleotide metabolism: it produces dUMP, the immediate precursor of thymidine nucleotides and it decreases the intracellular concentration of dUTP so that uracil cannot be incorporated into DNA. In Mycolicibacterium vanbaalenii (strain DSM 7251 / JCM 13017 / BCRC 16820 / KCTC 9966 / NRRL B-24157 / PYR-1) (Mycobacterium vanbaalenii), this protein is Deoxyuridine 5'-triphosphate nucleotidohydrolase.